We begin with the raw amino-acid sequence, 490 residues long: NADP-reducing hydrogenase subunit HndC (490 aa).

4Fe-4S ferredoxin-type domains follow at residues 433–462 and 463–490; these read LTYT…GTKK and QPHT…IIKQ.

This sequence belongs to the complex I 51 kDa subunit family. As to quaternary structure, heterotetramer composed of HndA, HndB, HndC and HndD subunits. HndC is probably the reducing subunit.

The enzyme catalyses H2 + NADP(+) = NADPH + H(+). Inhibited by oxygen. Catalyzes the reduction of NADP in the presence of molecular H2 to yield NADPH. The polypeptide is NADP-reducing hydrogenase subunit HndC (hndC) (Solidesulfovibrio fructosivorans (Desulfovibrio fructosivorans)).